The following is a 109-amino-acid chain: Phosphoribosyl-AMP cyclohydrolase (109 aa).

D80 is a binding site for Mg(2+). C81 provides a ligand contact to Zn(2+). Residues D82 and D84 each contribute to the Mg(2+) site. Residues C97 and C104 each coordinate Zn(2+).

Belongs to the PRA-CH family. In terms of assembly, homodimer. It depends on Mg(2+) as a cofactor. Zn(2+) is required as a cofactor.

It is found in the cytoplasm. The catalysed reaction is 1-(5-phospho-beta-D-ribosyl)-5'-AMP + H2O = 1-(5-phospho-beta-D-ribosyl)-5-[(5-phospho-beta-D-ribosylamino)methylideneamino]imidazole-4-carboxamide. Its pathway is amino-acid biosynthesis; L-histidine biosynthesis; L-histidine from 5-phospho-alpha-D-ribose 1-diphosphate: step 3/9. In terms of biological role, catalyzes the hydrolysis of the adenine ring of phosphoribosyl-AMP. This is Phosphoribosyl-AMP cyclohydrolase from Clostridium botulinum (strain Alaska E43 / Type E3).